The primary structure comprises 375 residues: Alcohol dehydrogenase 1A (375 aa).

Ser2 carries the N-acetylserine modification. At Ser23 the chain carries Phosphoserine. Tyr35 carries the post-translational modification Phosphotyrosine. Residue Cys47 participates in Zn(2+) binding. 48–52 lines the NAD(+) pocket; the sequence is GTDDH. Zn(2+) contacts are provided by His68, Cys98, Cys101, Cys104, Cys112, and Cys175. NAD(+) is bound by residues 200–205, Asp224, Lys229, Ile270, 293–295, 318–320, and Arg370; these read GLGGVG, VGV, and AVY.

Belongs to the zinc-containing alcohol dehydrogenase family. In terms of assembly, dimer of identical or heterodimer of closely related subunits alpha, beta, or gamma that are encoded by genes ADH1A, ADH1B, and ADH1C, respectively. It depends on Zn(2+) as a cofactor.

Its subcellular location is the cytoplasm. The catalysed reaction is a primary alcohol + NAD(+) = an aldehyde + NADH + H(+). It catalyses the reaction a secondary alcohol + NAD(+) = a ketone + NADH + H(+). It carries out the reaction butan-1-ol + NAD(+) = butanal + NADH + H(+). The enzyme catalyses 1-propanol + NAD(+) = propanal + NADH + H(+). The catalysed reaction is propan-2-ol + NAD(+) = acetone + NADH + H(+). Its function is as follows. Alcohol dehydrogenase. Oxidizes primary as well as secondary alcohols. Ethanol is a very poor substrate. This is Alcohol dehydrogenase 1A (ADH1A) from Macaca mulatta (Rhesus macaque).